We begin with the raw amino-acid sequence, 196 residues long: Carnitine operon protein CaiE (196 aa).

The interval 173–196 (TQPLRQMEENRPRLQGTTDVTPKR) is disordered. Polar residues predominate over residues 187 to 196 (QGTTDVTPKR).

Belongs to the transferase hexapeptide repeat family.

It functions in the pathway amine and polyamine metabolism; carnitine metabolism. Its function is as follows. Overproduction of CaiE stimulates the activity of CaiB and CaiD. The chain is Carnitine operon protein CaiE from Escherichia coli O127:H6 (strain E2348/69 / EPEC).